Reading from the N-terminus, the 630-residue chain is Coiled-coil domain-containing protein 120 (630 aa).

An involved in CYTH2-binding region spans residues 31–70; that stretch reads RLRGLLDRQRTLQEALSLKLQELRKVCLQEAELTGQLPPE. A coiled-coil region spans residues 109–173; it reads ELALEALERE…LRDVRARLGL (65 aa). Low complexity-rich tracts occupy residues 212–222 and 282–297; these read HSESSSLSESG and ASPTSPTRSLPRSASS. Disordered stretches follow at residues 212–435 and 457–534; these read HSES…GAPR and GGGT…NPLL. Positions 326–335 are enriched in polar residues; the sequence is RQWSGSQDSQ. Phosphoserine is present on residues serine 358 and serine 360. The segment covering 421 to 434 has biased composition (low complexity); that stretch reads ARPSSAAPASRGAP. Position 435 is an omega-N-methylarginine (arginine 435).

Interacts with NIN and CEP170; leading to recruit them to centrosomes. Directly interacts with CYTH2; this interaction stabilizes CCDC120, possibly by preventing ubiquitination. Ubiquitinated; interaction with CYTH2 may prevent ubiquitination.

The protein localises to the cytoplasm. Its subcellular location is the cytoskeleton. It is found in the microtubule organizing center. It localises to the centrosome. The protein resides in the centriole. The protein localises to the cell projection. Its subcellular location is the neuron projection. It is found in the growth cone. It localises to the endosome. Centriolar protein required for centriole subdistal appendage assembly and microtubule anchoring in interphase cells. Together with CCDC68, cooperate with subdistal appendage components ODF2, NIN and CEP170 for hierarchical subdistal appendage assembly. Recruits NIN and CEP170 to centrosomes. Also required for neurite growth. Localizes CYTH2 to vesicles to allow its transport along neurites, and subsequent ARF6 activation and neurite growth. This Homo sapiens (Human) protein is Coiled-coil domain-containing protein 120 (CCDC120).